Here is a 208-residue protein sequence, read N- to C-terminus: Large ribosomal subunit protein uL4 (208 aa).

The segment at 45 to 96 is disordered; the sequence is RQGTHKSKTRAEVRGGGRKPYRQKGTGNARQGSTRSPLMVGGGTIFGPTPHG. Residues 69 to 80 are compositionally biased toward polar residues; it reads GTGNARQGSTRS.

The protein belongs to the universal ribosomal protein uL4 family. In terms of assembly, part of the 50S ribosomal subunit.

Functionally, one of the primary rRNA binding proteins, this protein initially binds near the 5'-end of the 23S rRNA. It is important during the early stages of 50S assembly. It makes multiple contacts with different domains of the 23S rRNA in the assembled 50S subunit and ribosome. Its function is as follows. Forms part of the polypeptide exit tunnel. The protein is Large ribosomal subunit protein uL4 of Chlorobium phaeovibrioides (strain DSM 265 / 1930) (Prosthecochloris vibrioformis (strain DSM 265)).